The primary structure comprises 293 residues: MAITAQMVKELREKTGAGMMDCKKALTETDGNMDKAIDLLREKGIAKAAKKADRIAAEGLTLIKTDGNTGVILEVNSETDFVAKNEGFKELLNDLADHILAEKPESVEAAMGQKMANGSTVEEYITSAVAKIGEKITLRRFAVLTKGDDAAFGAYLHMGGKIGVLTVLNGTTDEETARDIAMHVAAVNPRFISRDQVSEEEANREREILTQQALQEGKPENIVAKMVEGRLNKYFEEICLLDQAFVKNPDEKVKQVVAAKNATVETFVRYEVGEGIEKRQENFAEEVMNQVKK.

The interval 79–82 (TDFV) is involved in Mg(2+) ion dislocation from EF-Tu.

It belongs to the EF-Ts family.

The protein resides in the cytoplasm. Its function is as follows. Associates with the EF-Tu.GDP complex and induces the exchange of GDP to GTP. It remains bound to the aminoacyl-tRNA.EF-Tu.GTP complex up to the GTP hydrolysis stage on the ribosome. In Bacillus licheniformis (strain ATCC 14580 / DSM 13 / JCM 2505 / CCUG 7422 / NBRC 12200 / NCIMB 9375 / NCTC 10341 / NRRL NRS-1264 / Gibson 46), this protein is Elongation factor Ts.